We begin with the raw amino-acid sequence, 288 residues long: Inositol monophosphatase 2 (288 aa).

Residues Glu-81, Asp-101, Ile-103, and Asp-104 each coordinate Mg(2+). Residue Glu-81 coordinates substrate. Residues 103–106 (IDGT), 205–207 (GSS), Gln-224, and Asp-231 contribute to the substrate site. Asp-231 contributes to the Mg(2+) binding site.

This sequence belongs to the inositol monophosphatase superfamily. Homodimer. The cofactor is Mg(2+).

It is found in the cytoplasm. It catalyses the reaction a myo-inositol phosphate + H2O = myo-inositol + phosphate. It carries out the reaction 1D-myo-inositol 1-phosphate + H2O = myo-inositol + phosphate. The enzyme catalyses 1D-myo-inositol 2-phosphate + H2O = myo-inositol + phosphate. The catalysed reaction is 1D-myo-inositol 3-phosphate + H2O = myo-inositol + phosphate. It catalyses the reaction 1D-myo-inositol 4-phosphate + H2O = myo-inositol + phosphate. It carries out the reaction 1D-myo-inositol 5-phosphate + H2O = myo-inositol + phosphate. The enzyme catalyses 1D-myo-inositol 6-phosphate + H2O = myo-inositol + phosphate. The catalysed reaction is alpha-D-glucose 1-phosphate + H2O = D-glucose + phosphate. It catalyses the reaction glycerol 2-phosphate + H2O = glycerol + phosphate. It carries out the reaction adenosine 2'-phosphate + H2O = adenosine + phosphate. It participates in polyol metabolism; myo-inositol biosynthesis; myo-inositol from D-glucose 6-phosphate: step 2/2. Inhibited by high Li(+) and restricted Mg(2+) concentrations. Functionally, phosphatase that can use myo-inositol monophosphates, myo-inositol 1,4-diphosphate, scyllo-inositol-1,4-diphosphate, glucose-1-phosphate, beta-glycerophosphate and 2'-AMP as substrates in vitro. It is likely that IMPA2 has an as yet unidentified in vivo substrate(s). Has been implicated as the pharmacological target for lithium (Li(+)) action in brain. This Homo sapiens (Human) protein is Inositol monophosphatase 2.